We begin with the raw amino-acid sequence, 288 residues long: Pyrroline-5-carboxylate reductase 3 (288 aa).

It belongs to the pyrroline-5-carboxylate reductase family. In terms of assembly, homodecamer; composed of 5 homodimers.

It localises to the cytoplasm. The catalysed reaction is L-proline + NADP(+) = (S)-1-pyrroline-5-carboxylate + NADPH + 2 H(+). The enzyme catalyses L-proline + NAD(+) = (S)-1-pyrroline-5-carboxylate + NADH + 2 H(+). Its pathway is amino-acid biosynthesis; L-proline biosynthesis; L-proline from L-glutamate 5-semialdehyde: step 1/1. Oxidoreductase that catalyzes the last step in proline biosynthesis, which corresponds to the reduction of pyrroline-5-carboxylate (P5C) to L-proline using NAD(P)H. Proline is synthesized from either glutamate or ornithine; both are converted to P5C, and then to proline via pyrroline-5-carboxylate reductases (PYCRs). PYCR3 is exclusively linked to the biosynthesis of proline from ornithine. The sequence is that of Pyrroline-5-carboxylate reductase 3 from Danio rerio (Zebrafish).